A 103-amino-acid chain; its full sequence is Small ribosomal subunit protein uS10c (103 aa).

The protein belongs to the universal ribosomal protein uS10 family. Part of the 30S ribosomal subunit.

It localises to the plastid. The protein localises to the chloroplast. In terms of biological role, involved in the binding of tRNA to the ribosomes. This is Small ribosomal subunit protein uS10c from Emiliania huxleyi (Coccolithophore).